Reading from the N-terminus, the 310-residue chain is Methionyl-tRNA formyltransferase (310 aa).

109–112 serves as a coordination point for (6S)-5,6,7,8-tetrahydrofolate; it reads SLLP.

Belongs to the Fmt family.

It carries out the reaction L-methionyl-tRNA(fMet) + (6R)-10-formyltetrahydrofolate = N-formyl-L-methionyl-tRNA(fMet) + (6S)-5,6,7,8-tetrahydrofolate + H(+). Attaches a formyl group to the free amino group of methionyl-tRNA(fMet). The formyl group appears to play a dual role in the initiator identity of N-formylmethionyl-tRNA by promoting its recognition by IF2 and preventing the misappropriation of this tRNA by the elongation apparatus. The chain is Methionyl-tRNA formyltransferase from Pseudomonas putida (strain ATCC 47054 / DSM 6125 / CFBP 8728 / NCIMB 11950 / KT2440).